The primary structure comprises 128 residues: Small ribosomal subunit protein uS11 (128 aa).

The protein belongs to the universal ribosomal protein uS11 family. As to quaternary structure, part of the 30S ribosomal subunit. Interacts with proteins S7 and S18. Binds to IF-3.

In terms of biological role, located on the platform of the 30S subunit, it bridges several disparate RNA helices of the 16S rRNA. Forms part of the Shine-Dalgarno cleft in the 70S ribosome. The polypeptide is Small ribosomal subunit protein uS11 (Wolbachia pipientis wMel).